A 789-amino-acid polypeptide reads, in one-letter code: Glycerol-3-phosphate acyltransferase (789 aa).

The HXXXXD motif motif lies at 275-280 (SHRSYI).

Belongs to the GPAT/DAPAT family.

Its subcellular location is the cell membrane. The enzyme catalyses sn-glycerol 3-phosphate + an acyl-CoA = a 1-acyl-sn-glycero-3-phosphate + CoA. It participates in phospholipid metabolism; CDP-diacylglycerol biosynthesis; CDP-diacylglycerol from sn-glycerol 3-phosphate: step 1/3. The protein is Glycerol-3-phosphate acyltransferase of Mycobacterium tuberculosis (strain ATCC 25177 / H37Ra).